We begin with the raw amino-acid sequence, 97 residues long: Exodeoxyribonuclease 7 small subunit (97 aa).

The disordered stretch occupies residues 64-97 (NGQLHPAEEKGDDVSNNGVQNQGYKSQFLDGDVF). Positions 77 to 88 (VSNNGVQNQGYK) are enriched in polar residues.

It belongs to the XseB family. As to quaternary structure, heterooligomer composed of large and small subunits.

It localises to the cytoplasm. The enzyme catalyses Exonucleolytic cleavage in either 5'- to 3'- or 3'- to 5'-direction to yield nucleoside 5'-phosphates.. Its function is as follows. Bidirectionally degrades single-stranded DNA into large acid-insoluble oligonucleotides, which are then degraded further into small acid-soluble oligonucleotides. In Limosilactobacillus fermentum (strain NBRC 3956 / LMG 18251) (Lactobacillus fermentum), this protein is Exodeoxyribonuclease 7 small subunit.